Consider the following 191-residue polypeptide: 3-isopropylmalate dehydratase small subunit (191 aa).

This sequence belongs to the LeuD family. LeuD type 1 subfamily. Heterodimer of LeuC and LeuD.

The catalysed reaction is (2R,3S)-3-isopropylmalate = (2S)-2-isopropylmalate. It functions in the pathway amino-acid biosynthesis; L-leucine biosynthesis; L-leucine from 3-methyl-2-oxobutanoate: step 2/4. In terms of biological role, catalyzes the isomerization between 2-isopropylmalate and 3-isopropylmalate, via the formation of 2-isopropylmaleate. The chain is 3-isopropylmalate dehydratase small subunit from Staphylococcus haemolyticus (strain JCSC1435).